A 348-amino-acid chain; its full sequence is Protein RecA (348 aa).

67–74 (GPESSGKT) serves as a coordination point for ATP.

The protein belongs to the RecA family.

The protein resides in the cytoplasm. In terms of biological role, can catalyze the hydrolysis of ATP in the presence of single-stranded DNA, the ATP-dependent uptake of single-stranded DNA by duplex DNA, and the ATP-dependent hybridization of homologous single-stranded DNAs. It interacts with LexA causing its activation and leading to its autocatalytic cleavage. This is Protein RecA from Salinispora arenicola (strain CNS-205).